The chain runs to 204 residues: Pyrrolidone-carboxylate peptidase (204 aa).

Active-site residues include Glu-80, Cys-142, and His-165.

This sequence belongs to the peptidase C15 family. In terms of assembly, homotetramer.

Its subcellular location is the cytoplasm. It carries out the reaction Release of an N-terminal pyroglutamyl group from a polypeptide, the second amino acid generally not being Pro.. Functionally, removes 5-oxoproline from various penultimate amino acid residues except L-proline. This Lysinibacillus sphaericus (strain C3-41) protein is Pyrrolidone-carboxylate peptidase.